A 261-amino-acid polypeptide reads, in one-letter code: MAHQAHAYHMVDPSPWPLTGAVAALLMSSGLAIWFHLHSMTLIVLGMILLILTMIQWWRDIIREGTFQGHHTPPVQKGLRYGMILFITSEVFFFLGFFWAFYHSSLAPTPELGGCWPPTGLTTLDPFEVPLLNTAVLLASGVTVTWAHHSLMEGERKQAIQSLALTILLGLYFTALQAMEYYEAPFTIADGVYGSTFFVATGFHGLHVIIGSTFLAVCLLRQVLFHFTSDHHFGFEAAAWYWHFVDVVWLFLYVSIYWWGS.

The Mitochondrial matrix portion of the chain corresponds to 1 to 15; sequence MAHQAHAYHMVDPSP. Residues 16–34 form a helical membrane-spanning segment; the sequence is WPLTGAVAALLMSSGLAIW. Over 35-40 the chain is Mitochondrial intermembrane; that stretch reads FHLHSM. A helical transmembrane segment spans residues 41-66; sequence TLIVLGMILLILTMIQWWRDIIREGT. At 67–72 the chain is on the mitochondrial matrix side; that stretch reads FQGHHT. A helical transmembrane segment spans residues 73–105; that stretch reads PPVQKGLRYGMILFITSEVFFFLGFFWAFYHSS. Residues 106–128 are Mitochondrial intermembrane-facing; it reads LAPTPELGGCWPPTGLTTLDPFE. A helical membrane pass occupies residues 129 to 152; it reads VPLLNTAVLLASGVTVTWAHHSLM. The Mitochondrial matrix portion of the chain corresponds to 153-155; it reads EGE. The helical transmembrane segment at 156-183 threads the bilayer; that stretch reads RKQAIQSLALTILLGLYFTALQAMEYYE. Over 184–190 the chain is Mitochondrial intermembrane; the sequence is APFTIAD. The chain crosses the membrane as a helical span at residues 191–223; sequence GVYGSTFFVATGFHGLHVIIGSTFLAVCLLRQV. Residues 224–232 lie on the Mitochondrial matrix side of the membrane; that stretch reads LFHFTSDHH. A helical transmembrane segment spans residues 233-256; that stretch reads FGFEAAAWYWHFVDVVWLFLYVSI. The Mitochondrial intermembrane segment spans residues 257-261; the sequence is YWWGS.

Belongs to the cytochrome c oxidase subunit 3 family. In terms of assembly, component of the cytochrome c oxidase (complex IV, CIV), a multisubunit enzyme composed of 14 subunits. The complex is composed of a catalytic core of 3 subunits MT-CO1, MT-CO2 and MT-CO3, encoded in the mitochondrial DNA, and 11 supernumerary subunits COX4I, COX5A, COX5B, COX6A, COX6B, COX6C, COX7A, COX7B, COX7C, COX8 and NDUFA4, which are encoded in the nuclear genome. The complex exists as a monomer or a dimer and forms supercomplexes (SCs) in the inner mitochondrial membrane with NADH-ubiquinone oxidoreductase (complex I, CI) and ubiquinol-cytochrome c oxidoreductase (cytochrome b-c1 complex, complex III, CIII), resulting in different assemblies (supercomplex SCI(1)III(2)IV(1) and megacomplex MCI(2)III(2)IV(2)).

Its subcellular location is the mitochondrion inner membrane. The enzyme catalyses 4 Fe(II)-[cytochrome c] + O2 + 8 H(+)(in) = 4 Fe(III)-[cytochrome c] + 2 H2O + 4 H(+)(out). Its function is as follows. Component of the cytochrome c oxidase, the last enzyme in the mitochondrial electron transport chain which drives oxidative phosphorylation. The respiratory chain contains 3 multisubunit complexes succinate dehydrogenase (complex II, CII), ubiquinol-cytochrome c oxidoreductase (cytochrome b-c1 complex, complex III, CIII) and cytochrome c oxidase (complex IV, CIV), that cooperate to transfer electrons derived from NADH and succinate to molecular oxygen, creating an electrochemical gradient over the inner membrane that drives transmembrane transport and the ATP synthase. Cytochrome c oxidase is the component of the respiratory chain that catalyzes the reduction of oxygen to water. Electrons originating from reduced cytochrome c in the intermembrane space (IMS) are transferred via the dinuclear copper A center (CU(A)) of subunit 2 and heme A of subunit 1 to the active site in subunit 1, a binuclear center (BNC) formed by heme A3 and copper B (CU(B)). The BNC reduces molecular oxygen to 2 water molecules using 4 electrons from cytochrome c in the IMS and 4 protons from the mitochondrial matrix. This chain is Cytochrome c oxidase subunit 3 (mt-co3), found in Danio rerio (Zebrafish).